The following is a 169-amino-acid chain: CKLF-like MARVEL transmembrane domain-containing protein 1 (169 aa).

Residues 17–135 (NLKQPETAAA…DAFVVTTKMR (119 aa)) form the MARVEL domain. A run of 4 helical transmembrane segments spans residues 22–42 (ETAA…ITQA), 46–66 (FITI…IYVL), 79–99 (LLDL…AILA), and 110–130 (YVGG…AFVV).

This sequence belongs to the chemokine-like factor family. In terms of tissue distribution, highly expressed in testis.

The protein localises to the membrane. This is CKLF-like MARVEL transmembrane domain-containing protein 1 (CMTM1) from Homo sapiens (Human).